The following is a 299-amino-acid chain: ATP phosphoribosyltransferase (299 aa).

It belongs to the ATP phosphoribosyltransferase family. Long subfamily. Equilibrium between an active dimeric form, an inactive hexameric form and higher aggregates. Interconversion between the various forms is largely reversible and is influenced by the natural substrates and inhibitors of the enzyme. Mg(2+) is required as a cofactor.

Its subcellular location is the cytoplasm. The enzyme catalyses 1-(5-phospho-beta-D-ribosyl)-ATP + diphosphate = 5-phospho-alpha-D-ribose 1-diphosphate + ATP. Its pathway is amino-acid biosynthesis; L-histidine biosynthesis; L-histidine from 5-phospho-alpha-D-ribose 1-diphosphate: step 1/9. Feedback inhibited by histidine. Its function is as follows. Catalyzes the condensation of ATP and 5-phosphoribose 1-diphosphate to form N'-(5'-phosphoribosyl)-ATP (PR-ATP). Has a crucial role in the pathway because the rate of histidine biosynthesis seems to be controlled primarily by regulation of HisG enzymatic activity. This chain is ATP phosphoribosyltransferase, found in Shigella flexneri serotype 5b (strain 8401).